Here is a 169-residue protein sequence, read N- to C-terminus: Ribosome maturation factor RimP (169 aa).

The protein belongs to the RimP family.

The protein localises to the cytoplasm. Functionally, required for maturation of 30S ribosomal subunits. The polypeptide is Ribosome maturation factor RimP (Koribacter versatilis (strain Ellin345)).